Here is a 246-residue protein sequence, read N- to C-terminus: MKLIIGVITLFPQMFDALKSGVIGRALKQDRLTLSFWNPRDYATDPHRTVDDRPYGGGPGMVMKFEPLALALKAAKAQLGENTKVIHLTPQGKLLTQAIVREKIHASPLILLAGRYEGIDERLIEAEVDEEWSIGDYILSGGELPAMVLIDAMTRLLPGVLGHKDSASQDSFTAGLLDYLHYTRPEKIADRPVPSVLLSGDHEAISRWRLKQSLGRTWQRRQDLIKRRSLSENEQRLLDEFFEESS.

S-adenosyl-L-methionine-binding positions include Gly114 and 134 to 139 (IGDYIL).

This sequence belongs to the RNA methyltransferase TrmD family. Homodimer.

The protein localises to the cytoplasm. It carries out the reaction guanosine(37) in tRNA + S-adenosyl-L-methionine = N(1)-methylguanosine(37) in tRNA + S-adenosyl-L-homocysteine + H(+). In terms of biological role, specifically methylates guanosine-37 in various tRNAs. The protein is tRNA (guanine-N(1)-)-methyltransferase of Coxiella burnetii (strain RSA 331 / Henzerling II).